We begin with the raw amino-acid sequence, 403 residues long: MEYKSPVRSNLEQTADPNHVLVNMGPSHPATHGTIQIIAALDGERVAKADIHCGYLHRGFEKESEHHTYHKIIPFTDRLNYCSALNNNFAYVEGVEKLLGIELTPRCIYLRTLLAEYNRVADHVTCVAATVMEMGAMTAFLYLMTIRDYIFEHLNQLTGARLTYSFARVGGLKNDLPDGWLERLEEILQFTEKYCGRIHGLLDRNRIFIDRTRDVGAMSPEHALNWGYTGPILRSTGAKIDIRKDNPYLAYADLDFEVPVGIKGDNYDRYYVRMREIDESISMVRQCMKKLPDGPVNIDDRRIMYPTKDKVYTKIEYLISHFKLVIDGIQVPAGEIYVSHEAPNGELGFYLISDGSGRPYKLHVRSPSFAHMGGMHTLLEGYQVADVIATFGSMNMIGGECDR.

It belongs to the complex I 49 kDa subunit family. As to quaternary structure, NDH-1 is composed of 14 different subunits. Subunits NuoB, C, D, E, F, and G constitute the peripheral sector of the complex.

The protein resides in the cell inner membrane. It carries out the reaction a quinone + NADH + 5 H(+)(in) = a quinol + NAD(+) + 4 H(+)(out). Functionally, NDH-1 shuttles electrons from NADH, via FMN and iron-sulfur (Fe-S) centers, to quinones in the respiratory chain. The immediate electron acceptor for the enzyme in this species is believed to be ubiquinone. Couples the redox reaction to proton translocation (for every two electrons transferred, four hydrogen ions are translocated across the cytoplasmic membrane), and thus conserves the redox energy in a proton gradient. This is NADH-quinone oxidoreductase subunit D from Pelobacter propionicus (strain DSM 2379 / NBRC 103807 / OttBd1).